Here is a 357-residue protein sequence, read N- to C-terminus: Glutamate 5-kinase (357 aa).

Lysine 7 provides a ligand contact to ATP. Substrate contacts are provided by serine 43, aspartate 130, and asparagine 142. 162 to 163 contributes to the ATP binding site; it reads TD. The 78-residue stretch at 270-347 folds into the PUA domain; that stretch reads QGELTLDAGA…PAAGPSPVVV (78 aa).

It belongs to the glutamate 5-kinase family.

It localises to the cytoplasm. It carries out the reaction L-glutamate + ATP = L-glutamyl 5-phosphate + ADP. It functions in the pathway amino-acid biosynthesis; L-proline biosynthesis; L-glutamate 5-semialdehyde from L-glutamate: step 1/2. Its function is as follows. Catalyzes the transfer of a phosphate group to glutamate to form L-glutamate 5-phosphate. The sequence is that of Glutamate 5-kinase from Parasynechococcus marenigrum (strain WH8102).